We begin with the raw amino-acid sequence, 525 residues long: Protein shisa-6 (525 aa).

The signal sequence occupies residues 1-30 (MALRRLLLPPLLLSLLLSLASLHLPPGADA). At 31 to 180 (ARGRSGNRTL…NKYDPEKDKT (150 aa)) the chain is on the extracellular side. 2 N-linked (GlcNAc...) asparagine glycosylation sites follow: Asn37 and Asn62. The helical transmembrane segment at 181–201 (NFTVYITCGVIAFVIVAGVFA) threads the bilayer. Residues 202–525 (KVSYDKAHRP…YTASKTEVTV (324 aa)) lie on the Cytoplasmic side of the membrane. Positions 241–294 (ISAIDTSPKENTPVRSTSKNHYTPVRTAKQTPGDRQYNHPILSSATQTPTHEKP) are disordered. Residues 243–261 (AIDTSPKENTPVRSTSKNH) are compositionally biased toward polar residues. A phosphoserine mark is found at Ser416, Ser422, and Ser434. Thr458 is subject to Phosphothreonine. The segment at 469 to 495 (MHSHPSASNNSYATLGQSQTAAKRHAF) is disordered. Residues 473–489 (PSASNNSYATLGQSQTA) are compositionally biased toward polar residues. At Thr502 the chain carries Phosphothreonine. The PDZ-binding signature appears at 522–525 (EVTV).

It belongs to the shisa family. In terms of assembly, component of the postsynaptic hippocampal AMPA-type glutamate receptor (AMPAR) complex, at least composed of pore forming AMPAR subunits GRIA1, GRIA2 and GRIA3 and AMPAR auxiliary proteins SHISA6 and SHISA7. Interacts (via PDZ-binding motif) with DLG4/PSD-95 (via PDZ domain); the interaction is direct. Post-translationally, N-glycosylated. In terms of tissue distribution, highly expressed in cerebellum and hippocampal neurons: CA1 stratum oriens and stratum radiatum, CA3 stratum oriens and stratum lucidum, and the dentate gyrus polymorphic layer. Expressed in other brain structures including olfactory bulb, cortex, amygdala and midbrain (at protein level). Also expressed in a subset of spermatogonial stem cells. Also expressed in eye, heart, kidney, lung, muscle and spleen. Isoform 2: Specifically expressed in hippocampus.

The protein localises to the postsynaptic density membrane. Its function is as follows. Involved in maintenance of high-frequency synaptic transmission at hippocampal CA3-CA1 synapses. Regulates AMPA-type glutamate receptor (AMPAR) immobilization at postsynaptic density keeping the channels in an activated state in the presence of glutamate and preventing synaptic depression. May play a role in self-renewal and differentiation of spermatogonial stem cells by inhibiting canonical Wnt signaling pathway. This Mus musculus (Mouse) protein is Protein shisa-6.